The primary structure comprises 95 residues: Signal recognition particle 19 kDa protein (95 aa).

Belongs to the SRP19 family. In terms of assembly, part of the signal recognition particle protein translocation system, which is composed of SRP and FtsY. Archaeal SRP consists of a 7S RNA molecule of 300 nucleotides and two protein subunits: SRP54 and SRP19.

The protein localises to the cytoplasm. Functionally, involved in targeting and insertion of nascent membrane proteins into the cytoplasmic membrane. Binds directly to 7S RNA and mediates binding of the 54 kDa subunit of the SRP. The chain is Signal recognition particle 19 kDa protein from Staphylothermus marinus (strain ATCC 43588 / DSM 3639 / JCM 9404 / F1).